A 611-amino-acid chain; its full sequence is mRNA export factor GLE1 (611 aa).

Disordered regions lie at residues 69 to 94 (SEDEMESDEGEESDDEEEEEDHSQIC) and 220 to 243 (KIRSEEAQEEARRKERAHQEEKIR). The segment covering 71 to 89 (DEMESDEGEESDDEEEEED) has biased composition (acidic residues).

The protein belongs to the GLE1 family. Part of the nuclear pore complex (NPC). The NPC has an eight-fold symmetrical structure comprising a central transport channel and two rings, the cytoplasmic and nuclear rings, to which eight filaments are attached. The cytoplasmic filaments have loose ends, while the nuclear filaments are joined in a distal ring, forming a nuclear basket. NPCs are highly dynamic in configuration and composition, and can be devided in 3 subcomplexes, the NUP62 subcomplex, the NUP107-160 subcomplex and the NUP93 subcomplex, containing approximately 30 different nucleoporin proteins.

It is found in the nucleus envelope. The protein localises to the nucleus. The protein resides in the nuclear pore complex. Its function is as follows. Required for seed viability. The sequence is that of mRNA export factor GLE1 from Arabidopsis thaliana (Mouse-ear cress).